Here is a 215-residue protein sequence, read N- to C-terminus: UPF0502 protein YceH (215 aa).

At lysine 80 the chain carries N6-acetyllysine.

Belongs to the UPF0502 family.

In Escherichia coli O45:K1 (strain S88 / ExPEC), this protein is UPF0502 protein YceH.